Here is a 92-residue protein sequence, read N- to C-terminus: Non-specific lipid-transfer protein 2 (92 aa).

4 cysteine pairs are disulfide-bonded: cysteine 4/cysteine 52, cysteine 14/cysteine 28, cysteine 29/cysteine 74, and cysteine 50/cysteine 88.

The protein belongs to the plant LTP family. In terms of tissue distribution, expressed in seeds and, at very low levels, in pulp of fruit (at protein level).

Plant non-specific lipid-transfer proteins transfer phospholipids as well as galactolipids across membranes. May play a role in wax or cutin deposition in the cell walls of expanding epidermal cells and certain secretory tissues. The polypeptide is Non-specific lipid-transfer protein 2 (Actinidia deliciosa (Kiwi)).